Reading from the N-terminus, the 65-residue chain is Large ribosomal subunit protein uL30 (65 aa).

Belongs to the universal ribosomal protein uL30 family. In terms of assembly, part of the 50S ribosomal subunit.

This chain is Large ribosomal subunit protein uL30, found in Desulfosudis oleivorans (strain DSM 6200 / JCM 39069 / Hxd3) (Desulfococcus oleovorans).